Consider the following 133-residue polypeptide: Exonuclease VapC9 (133 aa).

The 109-residue stretch at 5 to 113 folds into the PINc domain; sequence YLVDASALYA…LVLVTQDREL (109 aa). Asp-8, Asp-92, and Asp-110 together coordinate Mg(2+).

Belongs to the PINc/VapC protein family. In terms of assembly, homodimer, 2 of which then form a homotetramer. Mg(2+) serves as cofactor.

With respect to regulation, inhibited by EDTA. In terms of biological role, toxic component of a type II toxin-antitoxin (TA) system. Functionally, has ribonuclease activity. Has a slow ssDNA exonuclease activity. This chain is Exonuclease VapC9, found in Pyrobaculum aerophilum (strain ATCC 51768 / DSM 7523 / JCM 9630 / CIP 104966 / NBRC 100827 / IM2).